Reading from the N-terminus, the 122-residue chain is Serum amyloid A-1 protein (122 aa).

Positions 1-19 (MKLLTSLVFCSLLLGVCHG) are cleaved as a signal peptide. Positions 20 to 45 (GFFSFVHEAFQGAGDMWRAYTDMKEA) are important for amyloid formation. The span at 91–108 (HEDTIADQEANRHGRSGK) shows a compositional bias: basic and acidic residues. The disordered stretch occupies residues 91 to 122 (HEDTIADQEANRHGRSGKDPNYYRPPGLPDKY).

It belongs to the SAA family. Homohexamer; dimer of trimers. Can form amyloid fibrils after partial proteolysis; the native, undenatured protein does not form amyloid fibrils (in vitro). Apolipoprotein of the HDL complex. Binds to heparin. In terms of tissue distribution, detected in blood plasma (at protein level). Detected in liver.

It localises to the secreted. Major acute phase protein. The sequence is that of Serum amyloid A-1 protein (Saa1) from Mus musculus (Mouse).